The primary structure comprises 320 residues: Beta-carotene 3-hydroxylase, chloroplastic (320 aa).

A chloroplast-targeting transit peptide spans 1–78 (METQFLVSGR…EKELRGKLVV (78 aa)). 2 consecutive transmembrane segments (helical) span residues 118–138 (YLVA…LSVY) and 152–172 (LSEM…MEFW). Residues 165-292 (AAVGMEFWAR…KFNGVPYGLF (128 aa)) form the Fatty acid hydroxylase domain. Residues 177-182 (HEALWH) carry the Histidine box-1 motif. The short motif at 189–193 (HESHH) is the Histidine box-2 element. 2 helical membrane-spanning segments follow: residues 204 to 224 (DIFA…GFFH) and 228 to 248 (IPGL…AYMF). The Histidine box-3 motif lies at 250–255 (HDGLVH). A Histidine box-4 motif is present at residues 276-280 (HTLHH).

The protein belongs to the sterol desaturase family.

It localises to the plastid. The protein localises to the chloroplast membrane. The catalysed reaction is all-trans-beta-carotene + 4 reduced [2Fe-2S]-[ferredoxin] + 2 O2 + 4 H(+) = all-trans-zeaxanthin + 4 oxidized [2Fe-2S]-[ferredoxin] + 2 H2O. Its function is as follows. Nonheme diiron monooxygenase involved in the biosynthesis of xanthophylls. Specific for beta-ring hydroxylations of beta-carotene. Uses ferredoxin as an electron donor. This chain is Beta-carotene 3-hydroxylase, chloroplastic (BHY), found in Gentiana lutea (Yellow gentian).